Here is a 38-residue protein sequence, read N- to C-terminus: Photosystem II reaction center protein L (38 aa).

A helical transmembrane segment spans residues 17-37 (SLYWGLLLIFVLAVLFSSYIF).

This sequence belongs to the PsbL family. In terms of assembly, PSII is composed of 1 copy each of membrane proteins PsbA, PsbB, PsbC, PsbD, PsbE, PsbF, PsbH, PsbI, PsbJ, PsbK, PsbL, PsbM, PsbT, PsbY, PsbZ, Psb30/Ycf12, at least 3 peripheral proteins of the oxygen-evolving complex and a large number of cofactors. It forms dimeric complexes.

The protein localises to the plastid. It localises to the chloroplast thylakoid membrane. Functionally, one of the components of the core complex of photosystem II (PSII). PSII is a light-driven water:plastoquinone oxidoreductase that uses light energy to abstract electrons from H(2)O, generating O(2) and a proton gradient subsequently used for ATP formation. It consists of a core antenna complex that captures photons, and an electron transfer chain that converts photonic excitation into a charge separation. This subunit is found at the monomer-monomer interface and is required for correct PSII assembly and/or dimerization. This is Photosystem II reaction center protein L from Bigelowiella natans (Pedinomonas minutissima).